Here is a 541-residue protein sequence, read N- to C-terminus: Chaperonin GroEL 2 (541 aa).

ATP contacts are provided by residues T29–P32, D86–T90, G413, N476–A478, and D492.

It belongs to the chaperonin (HSP60) family. Forms a cylinder of 14 subunits composed of two heptameric rings stacked back-to-back. Interacts with the co-chaperonin GroES.

The protein resides in the secreted. Its subcellular location is the capsule. The protein localises to the cell surface. It is found in the cell wall. It carries out the reaction ATP + H2O + a folded polypeptide = ADP + phosphate + an unfolded polypeptide.. Together with its co-chaperonin GroES, plays an essential role in assisting protein folding. The GroEL-GroES system forms a nano-cage that allows encapsulation of the non-native substrate proteins and provides a physical environment optimized to promote and accelerate protein folding. This chain is Chaperonin GroEL 2, found in Mycobacterium leprae (strain TN).